The sequence spans 298 residues: MNLDFLSLSDKHNSVVVLGATATGKTSYAVGLAKELGGEIISADSRQVYKGLDLGTGKDLKEYGDVPHHLIDICTLEREYNVFDFQNDAYKAFEDIKRRKKLPIFAGGTGLYLDSLIREYELIPVPKNEELRASLAGKDLTELQKFFFEYNVPMHNKTDLENMDRLMRAIEIAEYKKTHPDAAEILNANRPDIRPLIIGLKYPREILRERIRLRLLERIKDGMIEETESLHKEGFSWERLESLGLEYKFTAQYLQGKIKSREEYVDSLYRAICQFAKRQETWFRRMEKNGVKINWVLK.

Residue 19–26 (GATATGKT) coordinates ATP. 21–26 (TATGKT) contacts substrate. Positions 44–47 (DSRQ) are interaction with substrate tRNA.

The protein belongs to the IPP transferase family. Monomer. Requires Mg(2+) as cofactor.

It carries out the reaction adenosine(37) in tRNA + dimethylallyl diphosphate = N(6)-dimethylallyladenosine(37) in tRNA + diphosphate. In terms of biological role, catalyzes the transfer of a dimethylallyl group onto the adenine at position 37 in tRNAs that read codons beginning with uridine, leading to the formation of N6-(dimethylallyl)adenosine (i(6)A). This is tRNA dimethylallyltransferase 2 from Treponema denticola (strain ATCC 35405 / DSM 14222 / CIP 103919 / JCM 8153 / KCTC 15104).